Consider the following 224-residue polypeptide: MAICDWPEDERPREKLLQRGASALSDAELLAIFLRTGVAGCNAIELARNLLQEFGSLRALLGAEQAQFCQAHGLGPAKYVQLQAVLEMSNRYLSECLQRGDSLTSPQLVRRYLQAQLRDRPREVFAMLLLDNQHRVLRFCELFFGTIDAASVYPREIVQTVLKHNAAAVILCHNHPSGVAEPSHADRHITERICDALRLIDVRVLDHFVIGDGDPVSFAERGWL.

An MPN domain is found at 102–224 (SLTSPQLVRR…PVSFAERGWL (123 aa)). Residues His-173, His-175, and Asp-186 each coordinate Zn(2+). The short motif at 173-186 (HNHPSGVAEPSHAD) is the JAMM motif element.

It belongs to the UPF0758 family.

The polypeptide is UPF0758 protein Tola_0183 (Tolumonas auensis (strain DSM 9187 / NBRC 110442 / TA 4)).